The primary structure comprises 81 residues: Small ribosomal subunit protein bS16 (81 aa).

The protein belongs to the bacterial ribosomal protein bS16 family.

The polypeptide is Small ribosomal subunit protein bS16 (Caldicellulosiruptor saccharolyticus (strain ATCC 43494 / DSM 8903 / Tp8T 6331)).